Here is a 294-residue protein sequence, read N- to C-terminus: Nucleoside-specific channel-forming protein Tsx (294 aa).

The first 22 residues, 1-22 (MKKTLLAAGAVVALSTTFAAGA), serve as a signal peptide directing secretion.

Belongs to the nucleoside-specific channel-forming outer membrane porin (Tsx) (TC 1.B.10) family.

It is found in the cell outer membrane. In terms of biological role, functions as a substrate-specific channel for nucleosides and deoxynucleosides. Also functions in albicidin uptake and as receptor for colicin K. Also is a receptor for several Tsx-specific bacteriophages. This Klebsiella pneumoniae protein is Nucleoside-specific channel-forming protein Tsx.